The following is a 427-amino-acid chain: Gamma-glutamyl phosphate reductase (427 aa).

This sequence belongs to the gamma-glutamyl phosphate reductase family.

It is found in the cytoplasm. The enzyme catalyses L-glutamate 5-semialdehyde + phosphate + NADP(+) = L-glutamyl 5-phosphate + NADPH + H(+). Its pathway is amino-acid biosynthesis; L-proline biosynthesis; L-glutamate 5-semialdehyde from L-glutamate: step 2/2. Functionally, catalyzes the NADPH-dependent reduction of L-glutamate 5-phosphate into L-glutamate 5-semialdehyde and phosphate. The product spontaneously undergoes cyclization to form 1-pyrroline-5-carboxylate. The polypeptide is Gamma-glutamyl phosphate reductase (Streptomyces griseus subsp. griseus (strain JCM 4626 / CBS 651.72 / NBRC 13350 / KCC S-0626 / ISP 5235)).